Consider the following 721-residue polypeptide: Ribonucleoside-diphosphate reductase subunit alpha (721 aa).

Substrate is bound by residues Thr-159, 175-176, Gly-204, 384-388, and 589-593; these read SC, NLCSE, and PTGSI. Cysteines 176 and 413 form a disulfide. The active-site Proton acceptor is the Asn-384. Cys-386 acts as the Cysteine radical intermediate in catalysis. Glu-388 acts as the Proton acceptor in catalysis.

The protein belongs to the ribonucleoside diphosphate reductase large chain family. In terms of assembly, tetramer of two alpha and two beta subunits.

It carries out the reaction a 2'-deoxyribonucleoside 5'-diphosphate + [thioredoxin]-disulfide + H2O = a ribonucleoside 5'-diphosphate + [thioredoxin]-dithiol. Its activity is regulated as follows. Under complex allosteric control mediated by deoxynucleoside triphosphates and ATP binding. The type of nucleotide bound at the specificity site determines substrate preference. It seems probable that ATP makes the enzyme reduce CDP and UDP, dGTP favors ADP reduction and dTTP favors GDP reduction. In terms of biological role, provides the precursors necessary for DNA synthesis. Catalyzes the biosynthesis of deoxyribonucleotides from the corresponding ribonucleotides. In Mycoplasma pneumoniae (strain ATCC 29342 / M129 / Subtype 1) (Mycoplasmoides pneumoniae), this protein is Ribonucleoside-diphosphate reductase subunit alpha (nrdE).